The chain runs to 616 residues: Chaperone protein HscA (616 aa).

It belongs to the heat shock protein 70 family.

Chaperone involved in the maturation of iron-sulfur cluster-containing proteins. Has a low intrinsic ATPase activity which is markedly stimulated by HscB. Involved in the maturation of IscU. The chain is Chaperone protein HscA from Enterobacter sp. (strain 638).